Here is a 213-residue protein sequence, read N- to C-terminus: Major fimbrial subunit (213 aa).

A signal peptide spans 1 to 20 (MKKTLLGSLILLAFAGNVQA). Residues Cys41 and Cys81 are joined by a disulfide bond.

The protein belongs to the fimbrial protein family.

The protein localises to the fimbrium. Its function is as follows. Mediates adherence to oropharyngeal epithelial cells. Helps the airway colonization process. The polypeptide is Major fimbrial subunit (hifA) (Haemophilus influenzae).